Consider the following 1353-residue polypeptide: Adenylate cyclase type 9 (1353 aa).

2 disordered regions span residues 1-27 (MASP…DSNS) and 49-71 (SISS…GGGG). Residues 1–117 (MASPPHQQLL…CFPQTQRRFR (117 aa)) are Cytoplasmic-facing. Residues 16–27 (EVSCDSSGDSNS) show a composition bias toward polar residues. Over residues 49 to 66 (SISSSCSSSGDSGGVPRR) the composition is skewed to low complexity. Residues 118-138 (YALFYIGFACLLWSIYFAVHM) form a helical membrane-spanning segment. Topologically, residues 139-141 (RSR) are extracellular. The helical transmembrane segment at 142–162 (LIVMVAPALCFLLVCVGFFLF) threads the bilayer. Over 163-171 (TFTKLYARH) the chain is Cytoplasmic. Residues 172-192 (YAWTSLALTLLVFALTLAAQF) form a helical membrane-spanning segment. Residues 193–215 (QVLTPVSGRGDSSNLTATARPTD) are Extracellular-facing. N-linked (GlcNAc...) asparagine glycosylation occurs at N206. A helical transmembrane segment spans residues 216 to 235 (TCLSQVGSFSMCIEVLFLLY). The Cytoplasmic segment spans residues 236 to 241 (TVMHLP). A helical transmembrane segment spans residues 242–259 (LYLSLCLGVAYSVLFETF). Topologically, residues 260–280 (GYHFRDEACFPSPGAGALHWE) are extracellular. Residues 281 to 301 (LLSRGLLHGCIHAIGVHLFVM) traverse the membrane as a helical segment. The Cytoplasmic portion of the chain corresponds to 302–786 (SQVRSRSTFL…VKTFASPTFS (485 aa)). Residues 349 to 375 (QGDEESENSVKRHATSSPKNRKKKSSI) are disordered. Residues 359–374 (KRHATSSPKNRKKKSS) are compositionally biased toward basic residues. Residues 394 to 521 (SILFADIVGF…NDVNLANLME (128 aa)) enclose the Guanylate cyclase 1 domain. Mg(2+)-binding residues include D399, I400, and D443. ATP contacts are provided by residues 399–404 (DIVGFT), 441–443 (LGD), and R487. At S610 the chain carries Phosphoserine. Positions 642–684 (EAGAEGGAPQNGCQDEHKNSTKASGGPNPKTQNGLLSPPQEEK) are disordered. S688, S691, and S706 each carry phosphoserine. The chain crosses the membrane as a helical span at residues 787–807 (SLLDVFLSTTVFLTLSTTCFL). The Extracellular portion of the chain corresponds to 808–818 (KYEAATVPPPP). Residues 819–839 (AALAVFSAALLLEVLSLAVSI) form a helical membrane-spanning segment. At 840–867 (RMVFFLEDVMACTKRLLEWIAGWLPRHC) the chain is on the cytoplasmic side. Residues 868-888 (IGAILVSLPALAVYSHVTSEY) traverse the membrane as a helical segment. Over 889-891 (ETN) the chain is Extracellular. Residues 892 to 912 (IHFPVFTGSAALIAVVHYCNF) traverse the membrane as a helical segment. The Cytoplasmic portion of the chain corresponds to 913-920 (CQLSSWMR). A helical transmembrane segment spans residues 921–941 (SSLATVVGAGPLLLLYVSLCP). Topologically, residues 942 to 975 (DSSVLTSPLDAVQNFSSERNPCNSSVPRDLRRPA) are extracellular. N-linked (GlcNAc...) asparagine glycans are attached at residues N955 and N964. A helical transmembrane segment spans residues 976-996 (SLIGQEVVLVFFLLLLLVWFL). Residues 997–1353 (NREFEVSYRL…LTKLNVSKSV (357 aa)) are Cytoplasmic-facing. In terms of domain architecture, Guanylate cyclase 2 spans 1058–1198 (GVIFASIVNF…DTVNIASRMD (141 aa)). ATP contacts are provided by residues K1108, 1185-1187 (DIW), 1192-1196 (NIASR), and K1232. A phosphoserine mark is found at S1257, S1259, S1295, and S1307. The segment covering 1292-1301 (SLGSDSSTQA) has biased composition (polar residues). The interval 1292–1326 (SLGSDSSTQAKDAHLSPKRPWKEPVKAEERGRFGK) is disordered. Over residues 1302–1326 (KDAHLSPKRPWKEPVKAEERGRFGK) the composition is skewed to basic and acidic residues.

Belongs to the adenylyl cyclase class-4/guanylyl cyclase family. The cofactor is Mg(2+). Mn(2+) is required as a cofactor. In terms of tissue distribution, detected in skeletal muscle, pancreas, lung, heart, kidney, liver, brain and placenta. Expressed in multiple cells of the lung, with expression highest in airway smooth muscle.

Its subcellular location is the cell membrane. It carries out the reaction ATP = 3',5'-cyclic AMP + diphosphate. With respect to regulation, insensitive to calcium/calmodulin, forskolin and somatostatin. Stimulated by beta-adrenergic receptor activation. Activity is down-regulated by calcium/calcineurin. In terms of biological role, adenylyl cyclase that catalyzes the formation of the signaling molecule cAMP in response to activation of G protein-coupled receptors. Contributes to signaling cascades activated by CRH (corticotropin-releasing factor), corticosteroids and beta-adrenergic receptors. The polypeptide is Adenylate cyclase type 9 (ADCY9) (Homo sapiens (Human)).